The following is a 209-amino-acid chain: Imidazoleglycerol-phosphate dehydratase (209 aa).

Belongs to the imidazoleglycerol-phosphate dehydratase family.

The protein resides in the cytoplasm. The enzyme catalyses D-erythro-1-(imidazol-4-yl)glycerol 3-phosphate = 3-(imidazol-4-yl)-2-oxopropyl phosphate + H2O. Its pathway is amino-acid biosynthesis; L-histidine biosynthesis; L-histidine from 5-phospho-alpha-D-ribose 1-diphosphate: step 6/9. This Paracidovorax citrulli (strain AAC00-1) (Acidovorax citrulli) protein is Imidazoleglycerol-phosphate dehydratase.